The following is an 80-amino-acid chain: Large ribosomal subunit protein bL31B (80 aa).

The protein belongs to the bacterial ribosomal protein bL31 family. Type B subfamily. In terms of assembly, part of the 50S ribosomal subunit.

The polypeptide is Large ribosomal subunit protein bL31B (Stenotrophomonas maltophilia (strain K279a)).